Here is a 470-residue protein sequence, read N- to C-terminus: Uronate isomerase (470 aa).

Belongs to the metallo-dependent hydrolases superfamily. Uronate isomerase family.

The enzyme catalyses D-glucuronate = D-fructuronate. The catalysed reaction is aldehydo-D-galacturonate = keto-D-tagaturonate. It functions in the pathway carbohydrate metabolism; pentose and glucuronate interconversion. The polypeptide is Uronate isomerase (Shigella boydii serotype 18 (strain CDC 3083-94 / BS512)).